The following is a 556-amino-acid chain: 2-succinyl-5-enolpyruvyl-6-hydroxy-3-cyclohexene-1-carboxylate synthase (556 aa).

Belongs to the TPP enzyme family. MenD subfamily. As to quaternary structure, homodimer. Mg(2+) is required as a cofactor. Mn(2+) serves as cofactor. Requires thiamine diphosphate as cofactor.

It catalyses the reaction isochorismate + 2-oxoglutarate + H(+) = 5-enolpyruvoyl-6-hydroxy-2-succinyl-cyclohex-3-ene-1-carboxylate + CO2. The protein operates within quinol/quinone metabolism; 1,4-dihydroxy-2-naphthoate biosynthesis; 1,4-dihydroxy-2-naphthoate from chorismate: step 2/7. It participates in quinol/quinone metabolism; menaquinone biosynthesis. In terms of biological role, catalyzes the thiamine diphosphate-dependent decarboxylation of 2-oxoglutarate and the subsequent addition of the resulting succinic semialdehyde-thiamine pyrophosphate anion to isochorismate to yield 2-succinyl-5-enolpyruvyl-6-hydroxy-3-cyclohexene-1-carboxylate (SEPHCHC). This is 2-succinyl-5-enolpyruvyl-6-hydroxy-3-cyclohexene-1-carboxylate synthase from Salmonella agona (strain SL483).